The primary structure comprises 505 residues: Alpha-1-syntrophin (505 aa).

Disordered regions lie at residues 1-24 (MASGRRAPRTGLLELRAGTGAGAG) and 40-75 (LTVSPADGEPGPEPGAVREPEPAQINGAAEPGAAPP). 2 consecutive PH domains span residues 6–269 (RAPR…AQIN) and 293–401 (DIKQ…DGCH). Residues 9–18 (RTGLLELRAG) show a composition bias toward low complexity. The PDZ domain maps to 87 to 170 (RVTVRKADAG…EVVLEVKYMK (84 aa)). S101, S184, S189, S193, and S200 each carry phosphoserine. The disordered stretch occupies residues 183 to 212 (TSVGWDSPPASPLQRQPSSPGPQTRNLSEA). The span at 195–209 (LQRQPSSPGPQTRNL) shows a compositional bias: polar residues. Positions 449–505 (PFEKLQMSSDDGASLLFLDFGGAEGEIQLDLHSCPKTMVFIIHSFLSAKVTRLGLLA) constitute an SU domain. Positions 483-505 (PKTMVFIIHSFLSAKVTRLGLLA) are calmodulin-binding.

This sequence belongs to the syntrophin family. In terms of assembly, monomer and homodimer. Interacts with the dystrophin related protein DTNA; SGCG of the dystrophin glycoprotein complex; NOS1; GRB2; GA; TGFA; MAPK12 and the sodium channel proteins SCN4A and SCN5A. Interacts with the dystrophin protein DMD in a calmodulin dependent manner and with related protein UTRN; SGCA of the dystrophin glycoprotein complex; F-actin; calmodulin and with the other members of the syntrophin family SNTB1 and SNTB2. Interacts with MYOC; regulates muscle hypertrophy. Interacts with DTNB. In terms of processing, phosphorylated by CaM-kinase II. Phosphorylation may inhibit the interaction with DMD. In terms of tissue distribution, highly expressed in skeletal and cardiac muscle and is also detected in brain.

The protein localises to the cell membrane. It localises to the sarcolemma. It is found in the cell junction. Its subcellular location is the cytoplasm. The protein resides in the cytoskeleton. In terms of biological role, adapter protein that binds to and probably organizes the subcellular localization of a variety of membrane proteins. May link various receptors to the actin cytoskeleton and the extracellular matrix via dystrophin glycoprotein complex. Plays an important role in synapse formation and in the organization of UTRN and acetylcholine receptors at the neuromuscular synapse. Binds to phosphatidylinositol 4,5-bisphosphate. This Oryctolagus cuniculus (Rabbit) protein is Alpha-1-syntrophin (SNTA1).